Here is a 684-residue protein sequence, read N- to C-terminus: Probable potassium transport system protein Kup (684 aa).

Transmembrane regions (helical) follow at residues 19 to 39, 61 to 81, 104 to 124, 151 to 171, 177 to 197, 223 to 243, 255 to 275, 303 to 323, 352 to 372, 381 to 401, 407 to 427, and 433 to 453; these read ALLV…LYVM, VSLI…LIAL, WLVL…MLTP, QVIW…RFGT, AFGP…FIAL, MGLF…ALYS, LSWP…AVWL, LGAI…LISG, LYIP…IGYF, AYGL…YQYL, PAVV…VFFI, and FLHG…VMYV.

Belongs to the HAK/KUP transporter (TC 2.A.72) family.

Its subcellular location is the cell membrane. It catalyses the reaction K(+)(in) + H(+)(in) = K(+)(out) + H(+)(out). In terms of biological role, transport of potassium into the cell. Likely operates as a K(+):H(+) symporter. The protein is Probable potassium transport system protein Kup of Lacticaseibacillus paracasei (strain ATCC 334 / BCRC 17002 / CCUG 31169 / CIP 107868 / KCTC 3260 / NRRL B-441) (Lactobacillus paracasei).